The chain runs to 587 residues: Dynein axonemal intermediate chain 2 (587 aa).

WD repeat units lie at residues 214–254, 261–302, 362–401, and 405–445; these read RPAS…NPVE, SHRD…EPTE, GHHG…SSIM, and YHTS…NNPS. Disordered regions lie at residues 519–542 and 562–587; these read LKER…DMKE and KEQQ…IVHE.

Belongs to the dynein intermediate chain family. Consists of at least two heavy chains and a number of intermediate and light chains. Interacts with DNAAF2. Interacts with DNAAF6/PIH1D3. Interacts with HEATR2; probably involved in outer arm dynein assembly. Interacts with C16ORF71/DAAP1.

The protein resides in the cytoplasm. Its subcellular location is the cytoskeleton. It localises to the cilium axoneme. It is found in the dynein axonemal particle. In terms of biological role, part of the dynein complex of multiciliated cell cilia. The sequence is that of Dynein axonemal intermediate chain 2 (dnai2) from Xenopus laevis (African clawed frog).